We begin with the raw amino-acid sequence, 577 residues long: Arginine--tRNA ligase (577 aa).

The 'HIGH' region signature appears at 122-132; that stretch reads PNVAKEMHVGH.

This sequence belongs to the class-I aminoacyl-tRNA synthetase family. As to quaternary structure, monomer.

Its subcellular location is the cytoplasm. It catalyses the reaction tRNA(Arg) + L-arginine + ATP = L-arginyl-tRNA(Arg) + AMP + diphosphate. The chain is Arginine--tRNA ligase from Aliivibrio fischeri (strain MJ11) (Vibrio fischeri).